A 903-amino-acid chain; its full sequence is Protein translocase subunit SecA (903 aa).

ATP is bound by residues Gln-89, 107–111 (GEGKT), and Asp-502. Zn(2+)-binding residues include Cys-886, Cys-888, Cys-897, and His-898.

It belongs to the SecA family. In terms of assembly, monomer and homodimer. Part of the essential Sec protein translocation apparatus which comprises SecA, SecYEG and auxiliary proteins SecDF-YajC and YidC. Zn(2+) is required as a cofactor.

It localises to the cell inner membrane. It is found in the cytoplasm. The enzyme catalyses ATP + H2O + cellular proteinSide 1 = ADP + phosphate + cellular proteinSide 2.. In terms of biological role, part of the Sec protein translocase complex. Interacts with the SecYEG preprotein conducting channel. Has a central role in coupling the hydrolysis of ATP to the transfer of proteins into and across the cell membrane, serving both as a receptor for the preprotein-SecB complex and as an ATP-driven molecular motor driving the stepwise translocation of polypeptide chains across the membrane. The protein is Protein translocase subunit SecA of Rhizobium meliloti (strain 1021) (Ensifer meliloti).